Reading from the N-terminus, the 582-residue chain is MLSDIDICRTTPLKPIEQIAAKAGLLADEFETHGLYKAKVSARCVKRLAEQQDGKLVLVTAITPTPLGEGKTVTTIGLAQGLQSLNQSVMACIRQPSMGPVFGVKGGAAGGGYSQVAPMDELNLHLTGDIHAVTAAHNLAAAAIDARIYHEQRAGYQAFEARTGLPALRIDPDRVVWKRVMDHNDRALRKVRVGINDEGKTINGFEREEGFDISAASELMAILALSKNLQDMRERIGKVVLAYNLDSEPVSAEQLQVAGAMTVTLKEAIKPTLMQTLEGVPTLIHAGPFANIAHGNSSIIADEIALKLSSYVVTEAGFGSDMGLEKACNIKSSTSHKAPDCVVIVATLRGLKANSGLYDLKPGMPLPDALFQPDRAALESGFSNLKWHIDNAQKYGLPVVVAINQFPQDSAEELGQLKLWIQQLPLNVRVAISEGFAKGGKGMEAVAREVIEACDAPANFRPLYRAEQTLEEKIITVCTKGYGCGEVQFSDTAKQQLALYQTLGFGELAVCMAKTPLSISSDSSLKGAPSGFTIMVREVRLCAGAGFVYALTGNVMTMPGLPDIPAFMALDIDENGDIVGLS.

An ATP-binding site is contributed by 65–72 (TPLGEGKT).

It belongs to the formate--tetrahydrofolate ligase family.

The enzyme catalyses (6S)-5,6,7,8-tetrahydrofolate + formate + ATP = (6R)-10-formyltetrahydrofolate + ADP + phosphate. It functions in the pathway one-carbon metabolism; tetrahydrofolate interconversion. This Vibrio vulnificus (strain CMCP6) protein is Formate--tetrahydrofolate ligase.